The following is a 306-amino-acid chain: Ribonuclease Z (306 aa).

Residues His-63, His-65, Asp-67, His-68, His-140, Asp-211, and His-269 each contribute to the Zn(2+) site. The Proton acceptor role is filled by Asp-67.

Belongs to the RNase Z family. As to quaternary structure, homodimer. Zn(2+) is required as a cofactor.

It catalyses the reaction Endonucleolytic cleavage of RNA, removing extra 3' nucleotides from tRNA precursor, generating 3' termini of tRNAs. A 3'-hydroxy group is left at the tRNA terminus and a 5'-phosphoryl group is left at the trailer molecule.. In terms of biological role, zinc phosphodiesterase, which displays some tRNA 3'-processing endonuclease activity. Probably involved in tRNA maturation, by removing a 3'-trailer from precursor tRNA. The polypeptide is Ribonuclease Z (Listeria monocytogenes serovar 1/2a (strain ATCC BAA-679 / EGD-e)).